The sequence spans 1285 residues: Peroxisomal ATPase PEX1 (1285 aa).

A compositionally biased stretch (polar residues) spans 344–353 (QQGKTKQSVM). A disordered region spans residues 344 to 373 (QQGKTKQSVMSPEKEKHPLESPNHKQIGSD). Ser-354 is modified (phosphoserine). Basic and acidic residues predominate over residues 355–373 (PEKEKHPLESPNHKQIGSD). ATP-binding positions include 601-608 (GGKGSGKS) and 883-890 (GPPGTGKT). The segment covering 1142–1161 (NGTSSDLSSQCPSAPSSVTQ) has biased composition (polar residues). The interval 1142 to 1162 (NGTSSDLSSQCPSAPSSVTQD) is disordered. A phosphoserine mark is found at Ser-1183, Ser-1211, and Ser-1213. Positions 1262–1285 (FQNPKKRKNPSGTVFRPGQKVTLA) are disordered.

It belongs to the AAA ATPase family. In terms of assembly, homooligomer; homooligomerizes in the cytosol, interaction with PEX6 promotes dissociation of the homooligomer. Interacts with PEX6; forming the PEX1-PEX6 AAA ATPase complex, which is composed of a heterohexamer formed by a trimer of PEX1-PEX6 dimers. Interacts indirectly with PEX26, via its interaction with PEX6.

The protein resides in the cytoplasm. Its subcellular location is the cytosol. The protein localises to the peroxisome membrane. The catalysed reaction is ATP + H2O = ADP + phosphate + H(+). Functionally, component of the PEX1-PEX6 AAA ATPase complex, a protein dislocase complex that mediates the ATP-dependent extraction of the PEX5 receptor from peroxisomal membranes, an essential step for PEX5 recycling. Specifically recognizes PEX5 monoubiquitinated at 'Cys-11', and pulls it out of the peroxisome lumen through the PEX2-PEX10-PEX12 retrotranslocation channel. Extraction by the PEX1-PEX6 AAA ATPase complex is accompanied by unfolding of the TPR repeats and release of bound cargo from PEX5. The protein is Peroxisomal ATPase PEX1 of Cricetulus griseus (Chinese hamster).